The sequence spans 459 residues: Probable Delta(5) fatty acid desaturase C (459 aa).

The region spanning 9–87 is the Cytochrome b5 heme-binding domain; sequence KKLYSWKEIS…LKQYEIGQVS (79 aa). 2 residues coordinate heme: H45 and H68. 2 helical membrane passes run 121–141 and 151–171; these read FAFGIIARLIFVYWFLITSYY and FYLNCLLAIVYSLSNSLFSLH. The Histidine box-1 signature appears at 174–178; the sequence is HDACH. A helical membrane pass occupies residues 187-207; it reads VWKWLGATYDLFIGASFFYWC. A Histidine box-2 motif is present at residues 210–215; the sequence is HVIGHH. 2 helical membrane passes run 289–309 and 315–335; these read FEIISFIIGKLVFIVFRFIIP and LVNLLTYFFIAEFFFGLYLSF. Residues 394 to 398 carry the Histidine box-3 motif; that stretch reads QVVHH.

It belongs to the fatty acid desaturase type 1 family. Fe cation serves as cofactor.

Its subcellular location is the membrane. The polypeptide is Probable Delta(5) fatty acid desaturase C (Dictyostelium discoideum (Social amoeba)).